The primary structure comprises 428 residues: Adenylosuccinate synthetase (428 aa).

GTP is bound by residues 11 to 17 (GDEGKGK) and 39 to 41 (GHT). Aspartate 12 (proton acceptor) is an active-site residue. Mg(2+)-binding residues include aspartate 12 and glycine 39. IMP is bound by residues 12 to 15 (DEGK), 37 to 40 (NAGH), threonine 130, arginine 144, asparagine 226, threonine 241, and arginine 305. Catalysis depends on histidine 40, which acts as the Proton donor. Substrate is bound at residue 301–307 (VTTGRKR). GTP-binding positions include arginine 307, 333–335 (KLD), and 415–417 (GTG).

Belongs to the adenylosuccinate synthetase family. In terms of assembly, homodimer. Requires Mg(2+) as cofactor.

It is found in the cytoplasm. The enzyme catalyses IMP + L-aspartate + GTP = N(6)-(1,2-dicarboxyethyl)-AMP + GDP + phosphate + 2 H(+). Its pathway is purine metabolism; AMP biosynthesis via de novo pathway; AMP from IMP: step 1/2. Its function is as follows. Plays an important role in the de novo pathway and in the salvage pathway of purine nucleotide biosynthesis. Catalyzes the first committed step in the biosynthesis of AMP from IMP. In Candida albicans (strain SC5314 / ATCC MYA-2876) (Yeast), this protein is Adenylosuccinate synthetase.